Reading from the N-terminus, the 414-residue chain is Serine hydroxymethyltransferase (414 aa).

(6S)-5,6,7,8-tetrahydrofolate-binding positions include L116 and 120 to 122; that span reads GHL. Position 225 is an N6-(pyridoxal phosphate)lysine (K225). Residue 349-351 coordinates (6S)-5,6,7,8-tetrahydrofolate; it reads SPF.

This sequence belongs to the SHMT family. In terms of assembly, homodimer. The cofactor is pyridoxal 5'-phosphate.

The protein resides in the cytoplasm. The enzyme catalyses (6R)-5,10-methylene-5,6,7,8-tetrahydrofolate + glycine + H2O = (6S)-5,6,7,8-tetrahydrofolate + L-serine. Its pathway is one-carbon metabolism; tetrahydrofolate interconversion. The protein operates within amino-acid biosynthesis; glycine biosynthesis; glycine from L-serine: step 1/1. Catalyzes the reversible interconversion of serine and glycine with tetrahydrofolate (THF) serving as the one-carbon carrier. This reaction serves as the major source of one-carbon groups required for the biosynthesis of purines, thymidylate, methionine, and other important biomolecules. Also exhibits THF-independent aldolase activity toward beta-hydroxyamino acids, producing glycine and aldehydes, via a retro-aldol mechanism. The protein is Serine hydroxymethyltransferase of Oenococcus oeni (strain ATCC BAA-331 / PSU-1).